The following is a 622-amino-acid chain: Chaperone protein HscA homolog (622 aa).

Belongs to the heat shock protein 70 family.

Functionally, chaperone involved in the maturation of iron-sulfur cluster-containing proteins. Has a low intrinsic ATPase activity which is markedly stimulated by HscB. The sequence is that of Chaperone protein HscA homolog from Aromatoleum aromaticum (strain DSM 19018 / LMG 30748 / EbN1) (Azoarcus sp. (strain EbN1)).